We begin with the raw amino-acid sequence, 177 residues long: Large ribosomal subunit protein uL6 (177 aa).

Basic and acidic residues predominate over residues 152-171; that stretch reads RPPEPYKGKGVRYDDEEVRR. Positions 152–177 are disordered; sequence RPPEPYKGKGVRYDDEEVRRKEAKKK.

Belongs to the universal ribosomal protein uL6 family. In terms of assembly, part of the 50S ribosomal subunit.

In terms of biological role, this protein binds to the 23S rRNA, and is important in its secondary structure. It is located near the subunit interface in the base of the L7/L12 stalk, and near the tRNA binding site of the peptidyltransferase center. This is Large ribosomal subunit protein uL6 from Shewanella putrefaciens (strain CN-32 / ATCC BAA-453).